The sequence spans 1091 residues: Rho GTPase-activating protein 7 (1091 aa).

In terms of domain architecture, SAM spans 11–78 (LTQIEAKEAC…LNKCAVMKLE (68 aa)). Phosphoserine is present on residues S86, S89, and S320. A focal adhesion-targeting (FAT) region spans residues 273–447 (QLNCVEISAL…RLSIYDNVPG (175 aa)). Disordered regions lie at residues 292–327 (VRKR…RTRS), 382–439 (PKAL…SSRL), and 491–553 (SDEG…GVGA). Low complexity-rich tracts occupy residues 297–323 (VSNS…SPVT) and 386–400 (SNGS…SSVN). The segment covering 414-425 (LRRENSSDSPKE) has biased composition (basic and acidic residues). The span at 499–511 (ALDSVSPCPSSPK) shows a compositional bias: polar residues. Residues 513 to 523 (IHLDVDNDRAT) are compositionally biased toward basic and acidic residues. The segment covering 526 to 535 (DLDSTGNSLN) has biased composition (polar residues). The segment at 614–636 (KHGFSWAVPKFMKRIKVPDYKDR) is polybasic cluster (PBR). The Rho-GAP domain occupies 641 to 847 (VPLTVNVQRT…HMIAECKKLF (207 aa)). The 208-residue stretch at 877-1084 (RNDESADYQH…RDSFSNQNTE (208 aa)) folds into the START domain.

In terms of assembly, interacts with EF1A1, facilitates EF1A1 distribution to the membrane periphery and ruffles upon growth factor stimulation and suppresses cell migration. Interacts with tensin TNS1 (via N-terminus); the interaction is decreased by phosphorylation of TNS1. Interacts with TNS3 and PTEN; in resting cells, interacts with TNS3 (via C2 tensin-type domain) but, following growth factor stimulation, TNS3 and PTEN are phosphorylated which leads to weakened interaction with TNS3 and enhanced interaction with PTEN. Interacts (via C-terminus) with tensin TNS4 (via SH2 domain); the interaction is independent of tyrosine phosphorylation of DLC1.

Its subcellular location is the cytoplasm. It is found in the cell junction. It localises to the focal adhesion. The protein resides in the membrane. In terms of biological role, functions as a GTPase-activating protein for the small GTPases RHOA, RHOB, RHOC and CDC42, terminating their downstream signaling. This induces morphological changes and detachment through cytoskeletal reorganization, playing a critical role in biological processes such as cell migration and proliferation. Also functions in vivo as an activator of the phospholipase PLCD1. Active DLC1 increases cell migration velocity but reduces directionality. Required for growth factor-induced epithelial cell migration; in resting cells, interacts with TNS3 while PTEN interacts with the p85 regulatory subunit of the PI3K kinase complex but growth factor stimulation induces phosphorylation of TNS3 and PTEN, causing them to change their binding preference so that PTEN interacts with DLC1 and TNS3 interacts with p85. The PTEN-DLC1 complex translocates to the posterior of migrating cells to activate RHOA while the TNS3-p85 complex translocates to the leading edge of migrating cells to promote RAC1 activation. The chain is Rho GTPase-activating protein 7 (DLC1) from Canis lupus familiaris (Dog).